Here is a 947-residue protein sequence, read N- to C-terminus: Bifunctional glutamine synthetase adenylyltransferase/adenylyl-removing enzyme (947 aa).

Residues 1–440 are adenylyl removase; the sequence is MTPLSSPLSQ…VFNELIGDDE (440 aa). The interval 450–947 is adenylyl transferase; it reads SEPWREVWQD…ASWRKWLVAV (498 aa).

This sequence belongs to the GlnE family. Mg(2+) is required as a cofactor.

The catalysed reaction is [glutamine synthetase]-O(4)-(5'-adenylyl)-L-tyrosine + phosphate = [glutamine synthetase]-L-tyrosine + ADP. The enzyme catalyses [glutamine synthetase]-L-tyrosine + ATP = [glutamine synthetase]-O(4)-(5'-adenylyl)-L-tyrosine + diphosphate. Involved in the regulation of glutamine synthetase GlnA, a key enzyme in the process to assimilate ammonia. When cellular nitrogen levels are high, the C-terminal adenylyl transferase (AT) inactivates GlnA by covalent transfer of an adenylyl group from ATP to specific tyrosine residue of GlnA, thus reducing its activity. Conversely, when nitrogen levels are low, the N-terminal adenylyl removase (AR) activates GlnA by removing the adenylyl group by phosphorolysis, increasing its activity. The regulatory region of GlnE binds the signal transduction protein PII (GlnB) which indicates the nitrogen status of the cell. In Salmonella schwarzengrund (strain CVM19633), this protein is Bifunctional glutamine synthetase adenylyltransferase/adenylyl-removing enzyme.